The following is a 220-amino-acid chain: Inner membrane-spanning protein YciB (220 aa).

Transmembrane regions (helical) follow at residues 20 to 40 (EVPPLLKLALELGPLLVFFFA), 57 to 77 (IGAPIFLATALFMAATVIALA), 86 to 106 (LPIMPLVSGIVVLVFGALTLW), 123 to 143 (LFGGILLGGLFFGKSLLGYVF), 156 to 176 (KLTLRWGLFFIFLAIVNEIVW), and 187 to 207 (FKVWGIMPITIVFTLLQMPLI).

The protein belongs to the YciB family.

It is found in the cell inner membrane. Its function is as follows. Plays a role in cell envelope biogenesis, maintenance of cell envelope integrity and membrane homeostasis. This chain is Inner membrane-spanning protein YciB, found in Brucella abortus (strain S19).